The following is a 405-amino-acid chain: Arginine deiminase (405 aa).

Cys395 functions as the Amidino-cysteine intermediate in the catalytic mechanism.

The protein belongs to the arginine deiminase family.

It localises to the cytoplasm. The catalysed reaction is L-arginine + H2O = L-citrulline + NH4(+). The protein operates within amino-acid degradation; L-arginine degradation via ADI pathway; carbamoyl phosphate from L-arginine: step 1/2. This Rhodococcus opacus (strain B4) protein is Arginine deiminase.